The following is a 510-amino-acid chain: Kynurenine 3-monooxygenase (510 aa).

This sequence belongs to the aromatic-ring hydroxylase family. KMO subfamily. FAD is required as a cofactor.

Its subcellular location is the mitochondrion outer membrane. It carries out the reaction L-kynurenine + NADPH + O2 + H(+) = 3-hydroxy-L-kynurenine + NADP(+) + H2O. It participates in cofactor biosynthesis; NAD(+) biosynthesis; quinolinate from L-kynurenine: step 1/3. Its function is as follows. Catalyzes the hydroxylation of L-kynurenine (L-Kyn) to form 3-hydroxy-L-kynurenine (L-3OHKyn). Required for synthesis of quinolinic acid. The sequence is that of Kynurenine 3-monooxygenase (bna4) from Aspergillus oryzae (strain ATCC 42149 / RIB 40) (Yellow koji mold).